The primary structure comprises 326 residues: BTB/POZ domain-containing protein At1g21780 (326 aa).

Residues 161 to 228 (TDVIIHTADG…LYGNITQEEF (68 aa)) enclose the BTB domain.

As to quaternary structure, homodimer. Interacts with CUL3A and CUL3B.

It functions in the pathway protein modification; protein ubiquitination. May act as a substrate-specific adapter of an E3 ubiquitin-protein ligase complex (CUL3-RBX1-BTB) which mediates the ubiquitination and subsequent proteasomal degradation of target proteins. In Arabidopsis thaliana (Mouse-ear cress), this protein is BTB/POZ domain-containing protein At1g21780.